The primary structure comprises 509 residues: uncharacterized protein (509 aa).

The protein resides in the virion. This is an uncharacterized protein from Acanthamoeba polyphaga mimivirus (APMV).